A 202-amino-acid polypeptide reads, in one-letter code: Adenylyl-sulfate kinase (202 aa).

31–38 (GLSASGKS) serves as a coordination point for ATP. Ser-105 acts as the Phosphoserine intermediate in catalysis.

This sequence belongs to the APS kinase family.

The catalysed reaction is adenosine 5'-phosphosulfate + ATP = 3'-phosphoadenylyl sulfate + ADP + H(+). It participates in sulfur metabolism; hydrogen sulfide biosynthesis; sulfite from sulfate: step 2/3. Functionally, catalyzes the synthesis of activated sulfate. The chain is Adenylyl-sulfate kinase (MET14) from Saccharomyces bayanus (Yeast).